Reading from the N-terminus, the 380-residue chain is Cystathionine gamma-synthase (380 aa).

Residue K195 is modified to N6-(pyridoxal phosphate)lysine.

The protein belongs to the trans-sulfuration enzymes family. Homotetramer. Pyridoxal 5'-phosphate serves as cofactor.

It is found in the cytoplasm. It catalyses the reaction O-succinyl-L-homoserine + L-cysteine = L,L-cystathionine + succinate + H(+). In terms of biological role, catalyzes the formation of L-cystathionine from O-succinyl-L-homoserine (OSHS) and L-cysteine, via a gamma-replacement reaction. In the absence of thiol, catalyzes gamma-elimination to form 2-oxobutanoate, succinate and ammonia. The sequence is that of Cystathionine gamma-synthase (metB) from Helicobacter pylori (strain ATCC 700392 / 26695) (Campylobacter pylori).